The chain runs to 362 residues: Dihydroorotate dehydrogenase (quinone) (362 aa).

FMN is bound by residues 62-66 (AGYDK) and T86. Position 66 (K66) interacts with substrate. Substrate is bound at residue 111–115 (NRLGF). Residues N139 and N170 each coordinate FMN. N170 is a binding site for substrate. S173 serves as the catalytic Nucleophile. N175 is a substrate binding site. The FMN site is built by K215 and S243. 244-245 (NT) lines the substrate pocket. Residues G266, G295, and 316–317 (YS) contribute to the FMN site.

It belongs to the dihydroorotate dehydrogenase family. Type 2 subfamily. Monomer. It depends on FMN as a cofactor.

It is found in the cell membrane. The enzyme catalyses (S)-dihydroorotate + a quinone = orotate + a quinol. The protein operates within pyrimidine metabolism; UMP biosynthesis via de novo pathway; orotate from (S)-dihydroorotate (quinone route): step 1/1. In terms of biological role, catalyzes the conversion of dihydroorotate to orotate with quinone as electron acceptor. The sequence is that of Dihydroorotate dehydrogenase (quinone) from Sinorhizobium fredii (strain NBRC 101917 / NGR234).